Reading from the N-terminus, the 160-residue chain is 6,7-dimethyl-8-ribityllumazine synthase (160 aa).

5-amino-6-(D-ribitylamino)uracil-binding positions include Trp26, 58 to 60 (AIE), and 80 to 82 (VVI). 85-86 (ET) contributes to the (2S)-2-hydroxy-3-oxobutyl phosphate binding site. Catalysis depends on His88, which acts as the Proton donor. A 5-amino-6-(D-ribitylamino)uracil-binding site is contributed by Asn113. Position 127 (Arg127) interacts with (2S)-2-hydroxy-3-oxobutyl phosphate.

Belongs to the DMRL synthase family. In terms of assembly, homopentamer.

It carries out the reaction (2S)-2-hydroxy-3-oxobutyl phosphate + 5-amino-6-(D-ribitylamino)uracil = 6,7-dimethyl-8-(1-D-ribityl)lumazine + phosphate + 2 H2O + H(+). It participates in cofactor biosynthesis; riboflavin biosynthesis; riboflavin from 2-hydroxy-3-oxobutyl phosphate and 5-amino-6-(D-ribitylamino)uracil: step 1/2. In terms of biological role, catalyzes the formation of 6,7-dimethyl-8-ribityllumazine by condensation of 5-amino-6-(D-ribitylamino)uracil with 3,4-dihydroxy-2-butanone 4-phosphate. This is the penultimate step in the biosynthesis of riboflavin. This Mycobacteroides abscessus (strain ATCC 19977 / DSM 44196 / CCUG 20993 / CIP 104536 / JCM 13569 / NCTC 13031 / TMC 1543 / L948) (Mycobacterium abscessus) protein is 6,7-dimethyl-8-ribityllumazine synthase.